The primary structure comprises 431 residues: Glutamate--tRNA ligase 2 (431 aa).

The short motif at 6-16 (PSPTGDMHIGN) is the 'HIGH' region element. A 'KMSKS' region motif is present at residues 235-239 (KMSKR). Lys238 lines the ATP pocket.

The protein belongs to the class-I aminoacyl-tRNA synthetase family. Glutamate--tRNA ligase type 1 subfamily. In terms of assembly, monomer.

It localises to the cytoplasm. The catalysed reaction is tRNA(Glu) + L-glutamate + ATP = L-glutamyl-tRNA(Glu) + AMP + diphosphate. Functionally, catalyzes the attachment of glutamate to tRNA(Glu) in a two-step reaction: glutamate is first activated by ATP to form Glu-AMP and then transferred to the acceptor end of tRNA(Glu). The chain is Glutamate--tRNA ligase 2 from Campylobacter jejuni subsp. doylei (strain ATCC BAA-1458 / RM4099 / 269.97).